Consider the following 745-residue polypeptide: Copper-transporting ATPase (745 aa).

Residues 1–67 (MKESFYIEGM…LIEKLGYSPK (67 aa)) enclose the HMA domain. Over 1 to 83 (MKESFYIEGM…KKEFFSPNVK (83 aa)) the chain is Cytoplasmic. Cys-12 and Cys-15 together coordinate Cu cation. The chain crosses the membrane as a helical span at residues 84–104 (LALAVIFTLFVVYLSMGAMLS). Topologically, residues 105–124 (PSLLPESLLTINHHSNFLNA) are extracellular. Residues 125 to 144 (CLQLIGALIVMHLGRDFYIQ) traverse the membrane as a helical segment. Over 145–151 (GFKALWH) the chain is Cytoplasmic. A helical transmembrane segment spans residues 152–172 (RQPNMSSLIAIGTSAALISSL). The Extracellular portion of the chain corresponds to 173-194 (WQLYLVYTNHYTDQWSYGHYYF). Residues 195 to 215 (ESVCVILMFVMVGKRIENVSK) traverse the membrane as a helical segment. Topologically, residues 216–343 (DKALDAMQAL…KAEISRLADK (128 aa)) are cytoplasmic. A helical transmembrane segment spans residues 344-366 (VSSVFVPSVIAIAVLAFVVWLII). Topologically, residues 367–379 (APKPDFWWNFRTA) are extracellular. The helical transmembrane segment at 380-397 (LEVFVSVLVISCPCALGL) threads the bilayer. Topologically, residues 398–685 (ATPMSILVAN…KLSQATIKNI (288 aa)) are cytoplasmic. Asp-435 functions as the 4-aspartylphosphate intermediate in the catalytic mechanism. Positions 631 and 635 each coordinate Mg(2+). Residues 686 to 705 (KENLFWAFCYNSVFIPLACG) form a helical membrane-spanning segment. The Extracellular portion of the chain corresponds to 706-716 (VLYKANIMLSP). Residues 717 to 735 (AIAGLAMSLSSVSVVLNSQ) form a helical membrane-spanning segment. The Cytoplasmic portion of the chain corresponds to 736–745 (RLRNFKIKDH).

This sequence belongs to the cation transport ATPase (P-type) (TC 3.A.3) family. Type IB subfamily.

The protein resides in the cell membrane. It carries out the reaction Cu(2+)(in) + ATP + H2O = Cu(2+)(out) + ADP + phosphate + H(+). Probably involved in copper export. The protein is Copper-transporting ATPase (copA) of Helicobacter pylori (strain J99 / ATCC 700824) (Campylobacter pylori J99).